The following is a 316-amino-acid chain: TATA-box-binding protein (316 aa).

Disordered stretches follow at residues 1–21 (MDQNNSLPPYAQGLASPQGAM) and 104–135 (LTTAPLPGTTPLYPSPMTPMTPITPATPASES). 2 stretches are compositionally biased toward low complexity: residues 104–115 (LTTAPLPGTTPL) and 123–133 (MTPITPATPAS). A run of 2 repeats spans residues 142-218 (LQNI…ARVV) and 232-309 (IQNM…YPIL). DNA contacts are provided by asparagine 144, arginine 180, lysine 195, asparagine 234, and arginine 271.

It belongs to the TBP family. In terms of assembly, binds DNA as monomer. Belongs to the TFIID complex together with the TBP-associated factors (TAFs). Part of a TFIID-containing RNA polymerase II pre-initiation complex that is composed of TBP and at least GTF2A1, GTF2A2, GTF2E1, GTF2E2, GTF2F1, GTF2H2, GTF2H3, GTF2H4, GTF2H5, GTF2B, TCEA1, ERCC2, ERCC3, TAF1, TAF2, TAF3, TAF4, TAF5, TAF6, TAF7, TAF8, TAF9, TAF10, TAF11, TAF12 and TAF13. Component of the transcription factor SL1/TIF-IB complex, composed of TBP and at least TAF1A, TAF1B, TAF1C and TAF1D. Association of TBP to form either TFIID or SL1/TIF-IB appears to be mutually exclusive. Interacts with TAF1A, TAF1B and TAF1C. Interacts with TFIIB, NCOA6, DRAP1, DR1 and ELF3. Interacts with SPIB, SNAPC1, SNAPC2 and SNAPC4. Interacts with UTF1. Interacts with BRF2; this interaction promotes recruitment of BRF2 to TATA box-containing promoters. Interacts with UBTF. Interacts with GPBP1. Interacts with CITED2. Interacts with ATF7IP. Interacts with LLPH. Interacts with HSF1 (via transactivation domain). Interacts with GTF2B (via C-terminus); this interaction with promoter-bound TBP guides RNA polymerase II into the pre-initiation complex (PIC). Interacts with PAX5. Interacts with MSX1; the interaction may inhibit MSX1 autoinactivation. Interacts with MSX3. Ubiquitously expressed.

It is found in the nucleus. General transcription factor that functions at the core of the DNA-binding multiprotein factor TFIID. Binding of TFIID to the TATA box is the initial transcriptional step of the pre-initiation complex (PIC), playing a role in the activation of eukaryotic genes transcribed by RNA polymerase II. Component of a BRF2-containing transcription factor complex that regulates transcription mediated by RNA polymerase III. Component of the transcription factor SL1/TIF-IB complex, which is involved in the assembly of the PIC (pre-initiation complex) during RNA polymerase I-dependent transcription. The rate of PIC formation probably is primarily dependent on the rate of association of SL1 with the rDNA promoter. SL1 is involved in stabilization of nucleolar transcription factor 1/UBTF on rDNA. The chain is TATA-box-binding protein (Tbp) from Mus musculus (Mouse).